Consider the following 655-residue polypeptide: Epithelial sodium channel subunit alpha (655 aa).

Residues 1–55 (MTDKEEEAEGGKKKEPMIGFYDSYQELFEFFCNNTTIHGTIRMVCSKHNNMKTVS) are Cytoplasmic-facing. A helical transmembrane segment spans residues 56–76 (WTILFITTFGVMYWQFGLLLG). The Extracellular segment spans residues 77 to 531 (QYYSYPVSIT…SQWSLWFGSS (455 aa)). 10 cysteine pairs are disulfide-bonded: Cys-102–Cys-275, Cys-199–Cys-206, Cys-252–Cys-259, Cys-364–Cys-448, Cys-385–Cys-425, Cys-385–Cys-444, Cys-389–Cys-440, Cys-398–Cys-425, Cys-398–Cys-448, and Cys-400–Cys-414. Residues 532 to 552 (VLSVVEMGELVFDLIAVGVIV) traverse the membrane as a helical segment. The Cytoplasmic segment spans residues 553–655 (LRRRRREKCQ…QEASEGPTVL (103 aa)). The interval 561-587 (CQASSDGEGTSDSTAGTHRGQENASRS) is disordered. The segment covering 562-586 (QASSDGEGTSDSTAGTHRGQENASR) has biased composition (polar residues).

This sequence belongs to the amiloride-sensitive sodium channel (TC 1.A.6) family. SCNN1A subfamily. In terms of assembly, heterotrimer; containing an alpha/SCNN1A, a beta/SCNN1B and a gamma/SCNN1G subunit. In terms of tissue distribution, strongly expressed in gill, kidney and rectum (at protein level). More weakly expressed in muscle, brain, heart, liver and intestine.

Its subcellular location is the apical cell membrane. It is found in the cell projection. It localises to the cilium. The protein resides in the cytoplasmic granule. The protein localises to the cytoplasm. Its subcellular location is the cytoplasmic vesicle. It is found in the secretory vesicle. It localises to the acrosome. The protein resides in the flagellum. It carries out the reaction Na(+)(in) = Na(+)(out). With respect to regulation, originally identified and characterized by its inhibition by the diuretic drug amiloride. Functionally, this is one of the three pore-forming subunits of the heterotrimeric epithelial sodium channel (ENaC), a critical regulator of sodium balance and fluid homeostasis. ENaC operates in epithelial tissues, where it mediates the electrodiffusion of sodium ions from extracellular fluid through the apical membrane of cells, with water following osmotically. In Neoceratodus forsteri (Australian lungfish), this protein is Epithelial sodium channel subunit alpha (scnn1a).